Reading from the N-terminus, the 367-residue chain is Homoserine O-acetyltransferase (367 aa).

An AB hydrolase-1 domain is found at 44–350 (NAILVTHAWT…AYGHDAFLLE (307 aa)). Serine 150 (nucleophile) is an active-site residue. Residue arginine 217 coordinates substrate. Catalysis depends on residues aspartate 311 and histidine 344. Aspartate 345 contacts substrate.

The protein belongs to the AB hydrolase superfamily. MetX family. Homodimer.

It localises to the cytoplasm. The enzyme catalyses L-homoserine + acetyl-CoA = O-acetyl-L-homoserine + CoA. It participates in amino-acid biosynthesis; L-methionine biosynthesis via de novo pathway; O-acetyl-L-homoserine from L-homoserine: step 1/1. Its function is as follows. Transfers an acetyl group from acetyl-CoA to L-homoserine, forming acetyl-L-homoserine. In Citrifermentans bemidjiense (strain ATCC BAA-1014 / DSM 16622 / JCM 12645 / Bem) (Geobacter bemidjiensis), this protein is Homoserine O-acetyltransferase.